The primary structure comprises 429 residues: Ribosomal RNA small subunit methyltransferase B (429 aa).

Residues 254–260, aspartate 277, aspartate 303, and aspartate 322 contribute to the S-adenosyl-L-methionine site; that span reads CAAPGGK. Cysteine 375 (nucleophile) is an active-site residue.

This sequence belongs to the class I-like SAM-binding methyltransferase superfamily. RsmB/NOP family.

The protein localises to the cytoplasm. The catalysed reaction is cytidine(967) in 16S rRNA + S-adenosyl-L-methionine = 5-methylcytidine(967) in 16S rRNA + S-adenosyl-L-homocysteine + H(+). Its function is as follows. Specifically methylates the cytosine at position 967 (m5C967) of 16S rRNA. In Shigella flexneri, this protein is Ribosomal RNA small subunit methyltransferase B.